Reading from the N-terminus, the 253-residue chain is ATP synthase subunit b 1 (253 aa).

The chain crosses the membrane as a helical span at residues 2 to 22 (LIDWFTVIAELVNFLILVWLL).

This sequence belongs to the ATPase B chain family. In terms of assembly, F-type ATPases have 2 components, F(1) - the catalytic core - and F(0) - the membrane proton channel. F(1) has five subunits: alpha(3), beta(3), gamma(1), delta(1), epsilon(1). F(0) has four main subunits: a(1), b(2) and c(10-14). The alpha and beta chains form an alternating ring which encloses part of the gamma chain. F(1) is attached to F(0) by a central stalk formed by the gamma and epsilon chains, while a peripheral stalk is formed by the delta and b chains.

It localises to the cell inner membrane. Functionally, f(1)F(0) ATP synthase produces ATP from ADP in the presence of a proton or sodium gradient. F-type ATPases consist of two structural domains, F(1) containing the extramembraneous catalytic core and F(0) containing the membrane proton channel, linked together by a central stalk and a peripheral stalk. During catalysis, ATP synthesis in the catalytic domain of F(1) is coupled via a rotary mechanism of the central stalk subunits to proton translocation. Component of the F(0) channel, it forms part of the peripheral stalk, linking F(1) to F(0). This is ATP synthase subunit b 1 from Prosthecochloris aestuarii (strain DSM 271 / SK 413).